Here is a 1859-residue protein sequence, read N- to C-terminus: Protein TIC 214 (1859 aa).

6 helical membrane passes run 18-38, 64-84, 87-107, 124-144, 172-192, and 221-241; these read IINSVVVVGLYYGFLTTFSIG, FITGQLMMFISIYYAPLHLAL, PHTITVLALPYLLFHFFWNNH, LSIQCVFLNNLIFQLFNHFIL, VGWLIGHILFMKWVGLVLFWI, and IFSILLFITCVYYLGRMPAPI. Residues 247-314 are disordered; that stretch reads KETSKTEERG…TEEIRVNGKE (68 aa). The span at 256–268 shows a compositional bias: acidic residues; that stretch reads GESEEERDVEIET. Residues 273-284 show a composition bias toward basic and acidic residues; that stretch reads KGTKQEQERSTE. The segment covering 295–306 has biased composition (acidic residues); sequence EKEDPDKIDETE.

It belongs to the TIC214 family. Part of the Tic complex.

The protein localises to the plastid. Its subcellular location is the chloroplast inner membrane. Involved in protein precursor import into chloroplasts. May be part of an intermediate translocation complex acting as a protein-conducting channel at the inner envelope. The protein is Protein TIC 214 of Buxus microphylla (Littleleaf boxwood).